The chain runs to 543 residues: Probable protein kinase UbiB (543 aa).

A Protein kinase domain is found at 123–501 (DFDIVPLASA…KRQQAKGQFL (379 aa)). ATP-binding positions include 129–137 (LASASIAQV) and K152. The active-site Proton acceptor is D287. The chain crosses the membrane as a helical span at residues 517 to 539 (TSNITALASISAATGVTFWLLSW).

This sequence belongs to the ABC1 family. UbiB subfamily.

It localises to the cell inner membrane. Its pathway is cofactor biosynthesis; ubiquinone biosynthesis [regulation]. In terms of biological role, is probably a protein kinase regulator of UbiI activity which is involved in aerobic coenzyme Q (ubiquinone) biosynthesis. In Aliivibrio salmonicida (strain LFI1238) (Vibrio salmonicida (strain LFI1238)), this protein is Probable protein kinase UbiB.